The primary structure comprises 89 residues: Large ribosomal subunit protein bL27 (89 aa).

Positions 1 to 21 (MAHKKAGGSSRNGRDSQSKRL) are disordered.

The protein belongs to the bacterial ribosomal protein bL27 family.

The polypeptide is Large ribosomal subunit protein bL27 (Rhizobium rhizogenes (strain K84 / ATCC BAA-868) (Agrobacterium radiobacter)).